The chain runs to 31 residues: Cytochrome b6-f complex subunit 6 (31 aa).

A helical membrane pass occupies residues 3-23; the sequence is ILINYFLLVGFCFALASGLFL.

The protein belongs to the PetL family. In terms of assembly, the 4 large subunits of the cytochrome b6-f complex are cytochrome b6, subunit IV (17 kDa polypeptide, PetD), cytochrome f and the Rieske protein, while the 4 small subunits are PetG, PetL, PetM and PetN. The complex functions as a dimer.

It localises to the plastid. The protein localises to the chloroplast thylakoid membrane. Functionally, component of the cytochrome b6-f complex, which mediates electron transfer between photosystem II (PSII) and photosystem I (PSI), cyclic electron flow around PSI, and state transitions. PetL is important for photoautotrophic growth as well as for electron transfer efficiency and stability of the cytochrome b6-f complex. This Thalassiosira pseudonana (Marine diatom) protein is Cytochrome b6-f complex subunit 6.